A 308-amino-acid chain; its full sequence is Carbonic anhydrase 6 (308 aa).

The first 17 residues, 1-17 (MRALVLLLSLFLLGGQA), serve as a signal peptide directing secretion. One can recognise an Alpha-carbonic anhydrase domain in the interval 21–278 (SDWTYSEGAL…LNHRVVESNF (258 aa)). A disulfide bond links C42 and C224. Residue N67 is glycosylated (N-linked (GlcNAc...) asparagine). The Proton donor/acceptor role is filled by H85. Zn(2+) contacts are provided by H111, H113, and H138. 220–221 (TT) contributes to the substrate binding site. N256 carries an N-linked (GlcNAc...) asparagine glycan.

This sequence belongs to the alpha-carbonic anhydrase family. Zn(2+) is required as a cofactor. As to expression, major constituent of saliva.

It localises to the secreted. The catalysed reaction is hydrogencarbonate + H(+) = CO2 + H2O. With respect to regulation, inhibited by coumarins, sulfonamide derivatives such as acetazolamide (AZA), saccharin and Foscarnet (phosphonoformate trisodium salt). Its function is as follows. Reversible hydration of carbon dioxide. Its role in saliva is unknown. The chain is Carbonic anhydrase 6 (CA6) from Homo sapiens (Human).